Consider the following 329-residue polypeptide: Biotin synthase (329 aa).

Residues 48–278 form the Radical SAM core domain; sequence FVGDKVFLCS…TKRISICGGR (231 aa). [4Fe-4S] cluster is bound by residues Cys-66, Cys-70, and Cys-73. [2Fe-2S] cluster contacts are provided by Ser-143 and Cys-203.

Belongs to the radical SAM superfamily. Biotin synthase family. As to quaternary structure, homodimer. [4Fe-4S] cluster is required as a cofactor. The cofactor is [2Fe-2S] cluster.

The enzyme catalyses (4R,5S)-dethiobiotin + (sulfur carrier)-SH + 2 reduced [2Fe-2S]-[ferredoxin] + 2 S-adenosyl-L-methionine = (sulfur carrier)-H + biotin + 2 5'-deoxyadenosine + 2 L-methionine + 2 oxidized [2Fe-2S]-[ferredoxin]. It functions in the pathway cofactor biosynthesis; biotin biosynthesis; biotin from 7,8-diaminononanoate: step 2/2. Its function is as follows. Catalyzes the conversion of dethiobiotin (DTB) to biotin by the insertion of a sulfur atom into dethiobiotin via a radical-based mechanism. The chain is Biotin synthase from Geotalea daltonii (strain DSM 22248 / JCM 15807 / FRC-32) (Geobacter daltonii).